The sequence spans 282 residues: Transcription factor BC1 (282 aa).

The interval 34 to 123 is disordered; sequence TTAPAIPEDA…ATDSHSLAER (90 aa). The segment covering 45-55 has biased composition (polar residues); the sequence is METSSVVLDTS. Residues 75-84 show a composition bias toward basic and acidic residues; that stretch reads HSKEAKENGR. Residues 109–116 carry the Nuclear localization signal motif; it reads ARRGQATD. The segment at 113–126 is basic motif; degenerate; sequence QATDSHSLAERVRR. A bHLH domain is found at 113-163; it reads QATDSHSLAERVRRERISERMRMLQALVPGCDKVTGKALILDEIINYVQSL. The interval 127-163 is helix-loop-helix motif; that stretch reads ERISERMRMLQALVPGCDKVTGKALILDEIINYVQSL. The segment at 219-251 is disordered; that stretch reads PAQSHAIMDTSNTSPTPYTLQVQGGSNNNSLSQ.

This sequence belongs to the bHLH protein family. In terms of assembly, homodimer. Component of a nuclear cell elongation controlling complex made of ILI5/BUL1, LO9-177 and BC1. Interacts with ILI5/BUL1 only in the presence of LO9-177. Interacts with IBH1. Binds to LO9-177 in the nucleus. Interacts with BCL1. In terms of tissue distribution, preferentially present in anthers and leaves lamina joints. Expressed in seedlings, leaves sheaths, collars and panicles.

It localises to the nucleus. Transcription activator that contributes, together with LO9-177 and ILI5/BUL1, to the promotion of leaf inclination and grain size by modulating cell elongation. Involved in the RLI1-dependent modulation of leaf inclination by promoting lamina joint cell elongation, especially in response to phosphate (Pi) availability. This chain is Transcription factor BC1, found in Oryza sativa subsp. japonica (Rice).